The chain runs to 305 residues: Dihydroorotate dehydrogenase A (fumarate) (305 aa).

FMN-binding positions include Ser-21 and 45–46 (KS). Residues Lys-45, 69–73 (NAIGL), and Asn-129 contribute to the substrate site. Asn-129 is a binding site for FMN. Residue Cys-132 is the Nucleophile of the active site. FMN is bound by residues Lys-167 and Ile-193. Residue 194–195 (NT) participates in substrate binding. FMN contacts are provided by residues Gly-219 and 245–246 (GG).

It belongs to the dihydroorotate dehydrogenase family. Type 1 subfamily. In terms of assembly, homodimer. FMN is required as a cofactor.

It localises to the cytoplasm. The catalysed reaction is (S)-dihydroorotate + fumarate = orotate + succinate. It functions in the pathway pyrimidine metabolism; UMP biosynthesis via de novo pathway. Its function is as follows. Catalyzes the conversion of dihydroorotate to orotate with fumarate as the electron acceptor. This chain is Dihydroorotate dehydrogenase A (fumarate) (pyrD), found in Lactiplantibacillus plantarum (strain ATCC BAA-793 / NCIMB 8826 / WCFS1) (Lactobacillus plantarum).